A 341-amino-acid polypeptide reads, in one-letter code: MIDERKRKILMAIVQDYISTAEPVGSRTIAKKYDLGISPATIRNEMADLEEMGYLEQPHTSAGRIPSVLGYRYYVDYLMEKPSLSREEEEFIRKVYEDKINSIGDLLEKTGKVLSSLTRYTAVVLSPEAGKVPLKHLQLVLLQPGKVLLIIVLEDGTLHHRAFEVPGDITAQDLEKVSAILNAKLYGVNPEKIRYSLIKEIYYELAQHQNLINITLELISNLNQDNQEHKIILGGLINLFNQPEFKNVEKVKTLLSILEQEEKIREIFSQLNVGVNVKIGSELNLKEIEDCSMIAAGYFSYGNSVGFIGVLGPTRMEYAKTVATVEFLSKYLSEIIGNKNF.

It belongs to the HrcA family.

Negative regulator of class I heat shock genes (grpE-dnaK-dnaJ and groELS operons). Prevents heat-shock induction of these operons. In Carboxydothermus hydrogenoformans (strain ATCC BAA-161 / DSM 6008 / Z-2901), this protein is Heat-inducible transcription repressor HrcA.